A 407-amino-acid chain; its full sequence is 1-deoxy-D-xylulose 5-phosphate reductoisomerase (407 aa).

NADPH is bound by residues T25, G26, S27, I28, N53, and N136. A 1-deoxy-D-xylulose 5-phosphate-binding site is contributed by K137. E138 lines the NADPH pocket. D162 contacts Mn(2+). The 1-deoxy-D-xylulose 5-phosphate site is built by S163, E164, S188, and H211. E164 provides a ligand contact to Mn(2+). G217 lines the NADPH pocket. Positions 224, 229, 230, and 233 each coordinate 1-deoxy-D-xylulose 5-phosphate. Residue E233 participates in Mn(2+) binding.

The protein belongs to the DXR family. Requires Mg(2+) as cofactor. Mn(2+) serves as cofactor.

The catalysed reaction is 2-C-methyl-D-erythritol 4-phosphate + NADP(+) = 1-deoxy-D-xylulose 5-phosphate + NADPH + H(+). The protein operates within isoprenoid biosynthesis; isopentenyl diphosphate biosynthesis via DXP pathway; isopentenyl diphosphate from 1-deoxy-D-xylulose 5-phosphate: step 1/6. In terms of biological role, catalyzes the NADPH-dependent rearrangement and reduction of 1-deoxy-D-xylulose-5-phosphate (DXP) to 2-C-methyl-D-erythritol 4-phosphate (MEP). In Rhodopseudomonas palustris (strain BisB18), this protein is 1-deoxy-D-xylulose 5-phosphate reductoisomerase.